The following is a 262-amino-acid chain: Proline-rich protein 23C (262 aa).

Disordered regions lie at residues methionine 1–proline 52 and valine 225–glutamate 262. Over residues proline 226–histidine 242 the composition is skewed to pro residues. A compositionally biased stretch (basic and acidic residues) spans alanine 243–proline 252. Residues cysteine 253–glutamate 262 are compositionally biased toward basic residues.

The protein belongs to the PRR23 family.

This Homo sapiens (Human) protein is Proline-rich protein 23C (PRR23C).